The primary structure comprises 206 residues: MCFQFSILYTCYLAHFGVFPRKYLVMAGIEAKFQQNPPLGTHKLFLGAHICLRILTVTATLTAAWMMITSKQTVEVYGIQVEAKYSYSSAFKFFSYANAIACGCSVLTLFPAFSLFYRGSTPMKFFFLFLHDLCMMSLVLAGCAAATAIGYVGRYGNNHAGWMAICDQFDEYCNRIRLSLMFSYLAFVFILMLTIMSANKSREIRV.

Over Met-1–Lys-43 the chain is Cytoplasmic. A helical transmembrane segment spans residues Leu-44–Ala-64. Residues Trp-65–Lys-92 are Extracellular-facing. The chain crosses the membrane as a helical span at residues Phe-93–Phe-113. Topologically, residues Ser-114 to Lys-124 are cytoplasmic. The chain crosses the membrane as a helical span at residues Phe-125 to Ala-145. Topologically, residues Ala-146–Arg-177 are extracellular. The helical transmembrane segment at Leu-178–Ala-198 threads the bilayer. The Cytoplasmic portion of the chain corresponds to Asn-199 to Val-206.

It belongs to the Casparian strip membrane proteins (CASP) family. In terms of assembly, homodimer and heterodimers.

Its subcellular location is the cell membrane. This chain is CASP-like protein 1F1, found in Vitis vinifera (Grape).